The chain runs to 262 residues: Late embryogenesis abundant protein 31 (262 aa).

The Nuclear localization signal (NLS) motif lies at Gln6 to Pro10. SMP domains lie at Val14 to Arg68, Ile136 to Ala192, and Ile201 to Ala260.

This sequence belongs to the LEA type SMP family. Embryo specific, only in dry mature seeds.

Its subcellular location is the nucleus. It is found in the nucleolus. The protein localises to the cytoplasm. LEA proteins are late embryonic proteins abundant in higher plant seed embryos. The function of those proteins is not known. Promotes germination rate. Enhances cation toxicity (e.g. lithium ion) and osmotic stress (e.g. NaCl and sorbitol) tolerance during germination and in seedlings. This chain is Late embryogenesis abundant protein 31, found in Arabidopsis thaliana (Mouse-ear cress).